Consider the following 623-residue polypeptide: Frizzled and smoothened-like protein M (623 aa).

The first 18 residues, 1–18, serve as a signal peptide directing secretion; that stretch reads MKSIFIIIFILYVFQVNS. The Extracellular segment spans residues 19–243; it reads QTIYPIDPSG…WDQLYNLSNT (225 aa). The FZ domain maps to 25 to 163; the sequence is DPSGKCEQYI…NYSEFNLTNY (139 aa). 2 cysteine pairs are disulfide-bonded: Cys-30–Cys-100 and Cys-42–Cys-93. Residues Asn-57, Asn-106, Asn-109, Asn-154, Asn-159, Asn-169, Asn-199, and Asn-239 are each glycosylated (N-linked (GlcNAc...) asparagine). A helical membrane pass occupies residues 244 to 264; the sequence is LAVLSTFGSLYLLVTFIILNP. The Cytoplasmic portion of the chain corresponds to 265-273; it reads KVTSFDRMY. Residues 274 to 294 form a helical membrane-spanning segment; it reads GFFNGSVFMMSLSGVILFIAG. At 295–317 the chain is on the extracellular side; the sequence is GPRALIKDGGARISVFEDPLCSS. The chain crosses the membrane as a helical span at residues 318–338; that stretch reads TGFIFQLFAINAILFWAYMGF. Over 339-354 the chain is Cytoplasmic; the sequence is DLWWRVKYITKPLNIQ. A helical transmembrane segment spans residues 355 to 375; it reads KYYVPIAFTISFIFSVIPLAT. The Extracellular segment spans residues 376–397; that stretch reads KNYRMVRGNIHCWVHKAVLQNT. A helical membrane pass occupies residues 398–418; that stretch reads LFFGPLGLTLTISTGFIGLVI. At 419-439 the chain is on the cytoplasmic side; it reads YEIYKIVKATGRGGIMKLEIK. Residues 440-460 traverse the membrane as a helical segment; that stretch reads PILNIVLIYFSFVYIFAFNFH. The Extracellular portion of the chain corresponds to 461 to 494; that stretch reads NDNNSKNTYGSIDEFFQCTLESDDPSKCTVGGPS. Asn-463 is a glycosylation site (N-linked (GlcNAc...) asparagine). Residues 495–515 traverse the membrane as a helical segment; the sequence is IGSLGYFIYCIRIYGIYCFFL. The Cytoplasmic portion of the chain corresponds to 516-623; sequence QGLNERAFKI…DIEIGSVNIK (108 aa). The segment at 552–590 is disordered; that stretch reads PSESGNSSTTAGTSTTINNSNINKKNNNSKPTLSTMDSN. Over residues 555 to 580 the composition is skewed to low complexity; the sequence is SGNSSTTAGTSTTINNSNINKKNNNS.

Belongs to the G-protein coupled receptor Fz/Smo family.

The protein resides in the membrane. This Dictyostelium discoideum (Social amoeba) protein is Frizzled and smoothened-like protein M (fslM-1).